The sequence spans 1427 residues: MLLPSDVARLVLGYLQQENLISTCQTFILESSDLKEYAEHCTDEGFIPACLLSLFGKNLTTILNEYVAMKTKETSNNVPAIMSSLWKKLDHTLSQIRSMQSSPRFAGSQRARTRTGIAEIKRQRKLASQTAPASAELLTLPYLSGQFTTPPSTGTQVTRPSGQISDPSRSYFVVVNHSQSQDTVTTGEALNVIPGAQEKKAHASLMSPGRRKSESQRKSTTLSGPHSTIRNFQDPNAFAVEKQMVIENAREKILSNKSLQEKLAENINKFLTSDNNIAQVPKQTDNNPTEPETSIDEFLGLPSEIHMSEEAIQDILEQTESDPAFQALFDLFDYGKTKNNKNISQSISSQPMESNPSIVLADETNLAVKGSFETEESDGQSGQPAFCTSYQNDDPLNALKNSNNHDVLRQEDQENFSQISTSIQKKAFKTAVPTEQKCDIDITFESVPNLNDFNQRGNSNAECNPHCAELYTNQMSTETEMAIGIEKNSLSSNVPSESQLQPDQPDIPITSFVSLGCEANNENLILSGKSSQLLSQDTSLTGKPSKKSQFCENSNDTVKLKINFHGSKSSDSSEVHKSKIEINVLEPVMSQLSNCQDNSCLQSEILPVSVESSHLNVSGQVEIHLGDSLSSTKQPSNDSASVELNHTENEAQASKSENSQEPSSSVKEENTIFLSLGGNANCEKVALTPPEGTPVENSHSLPPESVCSSVGDSHPESQNTDDKPSSNNSAEIDASNIVSLKVIISDDPFVSSDTELTSAVSSINGENLPTIILSSPTKSPTKNAELVKCLSSEETVGAVVYAEVGDSASMEQSLLTFKSEDSAVNNTQNEDGIAFSANVTPCVSKDGGYIQLMPATSTAFGNSNNILIATCVTDPTALGTSVSQSNVVVLPGNSAPMTAQPLPPQLQTPPRSNSVFAVNQAVSPNFSQGSAIIIASPVQPVLQGMVGMIPVSVVGQNGNNFSTPPRQVLHMPLTAPVCNRSIPQFPVPPKSQKAQGLRNKPCIGKQVNNLVDSSGHSVGCHAQKTEVSDKSIATDLGKKSEETTVPFPEESIVPAAKPCHRRVLCFDSTTAPVANTQGPNHKMVSQNKERNAVSFPNLDSPNVSSTLKPPSNNAIKREKEKPPLPKILSKSESAISRHTTIRETQSEKKVSPTEIVLESFHKATANKENELCSDVERQKNPENSKLSIGQQNGGLRSEKSIASLQEMTKKQGTSSNNKNVLSVGTAVKDLKQEQTKSASSLITTEMLQDIQRHSSVSRLADSSDLPVPRTPGSGAGEKHKEEPIDIIKAPSSRRFSEDSSTSKVMVPPVTPDLPACSPASETGSENSVNMAAHTLMILSRAAISRTTSATPLKDNTQQFRASSRSTTKKRKIEELDERERNSRPSSKNLTNSSIPMKKKKIKKKKLPSSFPAGMDVDKFLLSLHYDE.

The interval 1–318 (MLLPSDVARL…EEAIQDILEQ (318 aa)) is interaction with MIZF. The LisH domain occupies 3-35 (LPSDVARLVLGYLQQENLISTCQTFILESSDLK). 2 required for activation of histone gene transcription and interaction with MIZF regions span residues 5–25 (SDVA…STCQ) and 121–145 (KRQR…YLSG). The segment at 199–231 (KKAHASLMSPGRRKSESQRKSTTLSGPHSTIRN) is disordered. Ser-207 carries the phosphoserine modification. The span at 218 to 231 (KSTTLSGPHSTIRN) shows a compositional bias: polar residues. The mediates transcriptional activation stretch occupies residues 262–338 (KLAENINKFL…FDLFDYGKTK (77 aa)). Phosphoserine is present on residues Ser-554 and Ser-599. Polar residues predominate over residues 628–644 (SLSSTKQPSNDSASVEL). Disordered regions lie at residues 628–669 (SLSS…VKEE) and 683–732 (EKVA…SAEI). The interval 629–653 (LSSTKQPSNDSASVELNHTENEAQA) is required for acceleration of G1 phase. The span at 654 to 665 (SKSENSQEPSSS) shows a compositional bias: low complexity. Residues 695–711 (VENSHSLPPESVCSSVG) show a composition bias toward polar residues. Phosphoserine; by CDK2 occurs at positions 775 and 779. Required for acceleration of G1 phase stretches follow at residues 828-853 (QNED…IQLM) and 1039-1054 (KSEE…SIVP). Disordered stretches follow at residues 1095–1121 (FPNL…EKEK) and 1133–1152 (SAIS…KVSP). Over residues 1097-1114 (NLDSPNVSSTLKPPSNNA) the composition is skewed to polar residues. Ser-1100 is modified (phosphoserine; by CDK2). Residues Lys-1116 and Lys-1149 each participate in a glycyl lysine isopeptide (Lys-Gly) (interchain with G-Cter in SUMO2) cross-link. A compositionally biased stretch (basic and acidic residues) spans 1140–1151 (TIRETQSEKKVS). A phosphoserine mark is found at Ser-1151 and Ser-1200. Residue Lys-1228 is modified to N6-acetyllysine. Residues 1228–1252 (KDLKQEQTKSASSLITTEMLQDIQR) are required for acceleration of G1 phase. 2 disordered regions span residues 1253–1327 (HSSV…SENS) and 1348–1413 (SATP…FPAG). Ser-1254 carries the phosphoserine modification. Thr-1270 carries the post-translational modification Phosphothreonine; by CDK2. Basic and acidic residues predominate over residues 1276 to 1285 (GEKHKEEPID). Lys-1280 is covalently cross-linked (Glycyl lysine isopeptide (Lys-Gly) (interchain with G-Cter in SUMO2)). The interval 1325 to 1349 (ENSVNMAAHTLMILSRAAISRTTSA) is required for acceleration of G1 phase. Residues 1348-1365 (SATPLKDNTQQFRASSRS) show a composition bias toward polar residues. Thr-1350 carries the post-translational modification Phosphothreonine; by CDK2. The segment covering 1371–1382 (KIEELDERERNS) has biased composition (basic and acidic residues). The segment covering 1383–1394 (RPSSKNLTNSSI) has biased composition (polar residues). Positions 1396–1406 (MKKKKIKKKKL) are enriched in basic residues.

It belongs to the NPAT family. Interacts with the cylin/CDK complexes CCNE1/CDK2 and CCNA1/CDK2. Interacts with BZW1, CASP8AP2, CREBBP, MIZF and YY1. Interacts with the RUVBL1, RUVBL2 and TRRAP subunits of the NuA4 complex. May also interact with GAPDH, NME1, NME2 and STIP1. Phosphorylated at Ser-775, Ser-779, Ser-1100, Thr-1270 and Thr-1350 by CCNE1/CDK2 at G1-S transition and until prophase, which promotes association with histone gene clusters and stimulates activation of histone transcription. Also phosphorylated by CCNA1/CDK2 in vitro. As to expression, ubiquitously expressed.

The protein resides in the nucleus. It localises to the cajal body. Required for progression through the G1 and S phases of the cell cycle and for S phase entry. Activates transcription of the histone H2A, histone H2B, histone H3 and histone H4 genes in conjunction with MIZF. Also positively regulates the ATM, MIZF and PRKDC promoters. Transcriptional activation may be accomplished at least in part by the recruitment of the NuA4 histone acetyltransferase (HAT) complex to target gene promoters. The chain is Protein NPAT (NPAT) from Homo sapiens (Human).